The sequence spans 255 residues: MFIGIVSLFPEMFRAITDYGVTGRAVKKGLLNIQSWSPRDFAHDRHRTVDDRPYGGGPGMLMMVQPLRDAIHAAKAAAGEGAKVIYLSPQGRKLDQAGVSELATNQKLILVCGRYEGVDERVIQTEIDEEWSIGDYVLSGGELPAMTLIDSVARFIPGVLGHEASAIEDSFADGLLDCPHYTRPEVLEGMEVPPVLLSGNHAEIRRWRLKQSLGRTWLRRPELLENLALTEEQARLLAEFKTEHAQQQHKHDGMA.

Residues glycine 113 and 133 to 138 (IGDYVL) contribute to the S-adenosyl-L-methionine site.

Belongs to the RNA methyltransferase TrmD family. In terms of assembly, homodimer.

The protein resides in the cytoplasm. The enzyme catalyses guanosine(37) in tRNA + S-adenosyl-L-methionine = N(1)-methylguanosine(37) in tRNA + S-adenosyl-L-homocysteine + H(+). Its function is as follows. Specifically methylates guanosine-37 in various tRNAs. The polypeptide is tRNA (guanine-N(1)-)-methyltransferase (Salmonella agona (strain SL483)).